The following is a 478-amino-acid chain: Phosphoglycerate kinase 2, chloroplastic (478 aa).

Residues 1-74 (MASTAATAAL…GKGARGVITM (74 aa)) constitute a chloroplast transit peptide. At S78 the chain carries Phosphoserine. Positions 96, 97, 99, 113, 135, 136, 138, 139, 194, 226, and 227 each coordinate (2R)-3-phosphoglycerate. Residue G272 coordinates ADP. G272 is a CDP binding site. AMP-binding residues include K274 and K278. Residue K278 coordinates ATP. G296 contacts ADP. G296 contributes to the CDP binding site. AMP contacts are provided by G297 and G369. ATP is bound by residues G297 and G369. Residues G394 and F399 each contribute to the CDP site. Residue F399 participates in ADP binding. Residue E400 participates in AMP binding. The ATP site is built by E400, D431, and S432. A Mg(2+)-binding site is contributed by D431.

It belongs to the phosphoglycerate kinase family. Monomer. Requires Mg(2+) as cofactor.

Its subcellular location is the plastid. The protein localises to the chloroplast. It catalyses the reaction (2R)-3-phosphoglycerate + ATP = (2R)-3-phospho-glyceroyl phosphate + ADP. It functions in the pathway carbohydrate biosynthesis; Calvin cycle. The protein is Phosphoglycerate kinase 2, chloroplastic of Arabidopsis thaliana (Mouse-ear cress).